We begin with the raw amino-acid sequence, 121 residues long: Large ribosomal subunit protein bL12 (121 aa).

Belongs to the bacterial ribosomal protein bL12 family. In terms of assembly, homodimer. Part of the ribosomal stalk of the 50S ribosomal subunit. Forms a multimeric L10(L12)X complex, where L10 forms an elongated spine to which 2 to 4 L12 dimers bind in a sequential fashion. Binds GTP-bound translation factors.

Functionally, forms part of the ribosomal stalk which helps the ribosome interact with GTP-bound translation factors. Is thus essential for accurate translation. This is Large ribosomal subunit protein bL12 from Proteus mirabilis (strain HI4320).